Here is a 303-residue protein sequence, read N- to C-terminus: Enoyl-CoA hydratase domain-containing protein 3, mitochondrial (303 aa).

The transit peptide at 1-17 (MAAVAVLRAFGASGPMC) directs the protein to the mitochondrion. Lys-110 carries the post-translational modification N6-succinyllysine.

It belongs to the enoyl-CoA hydratase/isomerase family. As to expression, expressed in adipocytes. Expressed in blood cells, with higher expression in patients with low coronary lesions.

Its subcellular location is the mitochondrion. Functionally, may play a role in fatty acid biosynthesis and insulin sensitivity. In Homo sapiens (Human), this protein is Enoyl-CoA hydratase domain-containing protein 3, mitochondrial.